The chain runs to 333 residues: HTH-type transcriptional regulator Cphy_2742 (333 aa).

Residues 1 to 55 enclose the HTH lacI-type domain; that stretch reads MNIYDVSQKAGVSIATVSRVINGNPNVSEKTKQKVLDVMKEIGYTPNVFARGLGL. Residues 3–22 constitute a DNA-binding region (H-T-H motif); the sequence is IYDVSQKAGVSIATVSRVIN.

The protein resides in the cytoplasm. Its function is as follows. Involved in control of pectin and galacturonic acid metabolism. Probably represses a comprehensive set of pectin fermentation genes by binding a conserved palindrome at or downstream of their transcription start site to block transcription. In the presence of galacturonic acid may activate transcription of acetate synthesis and other aspects of carbon metabolism. This Lachnoclostridium phytofermentans (strain ATCC 700394 / DSM 18823 / ISDg) (Clostridium phytofermentans) protein is HTH-type transcriptional regulator Cphy_2742.